A 402-amino-acid polypeptide reads, in one-letter code: Propionate kinase (402 aa).

ATP contacts are provided by N11 and K18. N11 contributes to the Mg(2+) binding site. R86 contacts substrate. D143 functions as the Proton donor/acceptor in the catalytic mechanism. ATP-binding positions include H175, 203-207, 278-280, and 326-330; these read HLGNG, DLR, and GIGEN.

This sequence belongs to the acetokinase family. TdcD subfamily. In terms of assembly, homodimer. Mg(2+) serves as cofactor.

It carries out the reaction propanoate + ATP = propanoyl phosphate + ADP. Its pathway is amino-acid degradation; L-threonine degradation via propanoate pathway; propanoate from L-threonine: step 4/4. In terms of biological role, catalyzes the conversion of propionyl phosphate and ADP to propionate and ATP. The polypeptide is Propionate kinase (Salmonella typhimurium (strain D23580)).